The chain runs to 540 residues: DM7 family protein GM11956 (540 aa).

The disordered stretch occupies residues 416–443 (ATDTRGRDEIRTSCDQPQEKDEGSAEAD). Basic and acidic residues predominate over residues 417-443 (TDTRGRDEIRTSCDQPQEKDEGSAEAD).

Belongs to the DM7 family.

This chain is DM7 family protein GM11956, found in Drosophila sechellia (Fruit fly).